The chain runs to 304 residues: Acetyl-coenzyme A carboxylase carboxyl transferase subunit beta (304 aa).

Residues 23–292 form the CoA carboxyltransferase N-terminal domain; that stretch reads VWTKCDSCGQ…PNPDAPREGV (270 aa). Residues Cys27, Cys30, Cys46, and Cys49 each coordinate Zn(2+). The C4-type zinc-finger motif lies at 27 to 49; that stretch reads CDSCGQVLYRAELERNLEVCPKC. The segment at 283–304 is disordered; the sequence is PNPDAPREGVVVPPAPDQESEA.

The protein belongs to the AccD/PCCB family. In terms of assembly, acetyl-CoA carboxylase is a heterohexamer composed of biotin carboxyl carrier protein (AccB), biotin carboxylase (AccC) and two subunits each of ACCase subunit alpha (AccA) and ACCase subunit beta (AccD). Zn(2+) serves as cofactor.

It localises to the cytoplasm. It carries out the reaction N(6)-carboxybiotinyl-L-lysyl-[protein] + acetyl-CoA = N(6)-biotinyl-L-lysyl-[protein] + malonyl-CoA. Its pathway is lipid metabolism; malonyl-CoA biosynthesis; malonyl-CoA from acetyl-CoA: step 1/1. In terms of biological role, component of the acetyl coenzyme A carboxylase (ACC) complex. Biotin carboxylase (BC) catalyzes the carboxylation of biotin on its carrier protein (BCCP) and then the CO(2) group is transferred by the transcarboxylase to acetyl-CoA to form malonyl-CoA. This Salmonella agona (strain SL483) protein is Acetyl-coenzyme A carboxylase carboxyl transferase subunit beta.